A 341-amino-acid chain; its full sequence is MLVLGLETSCDETGVALYDSERGLLADALFSQIDLHRVFGGVVPELASRDHVKRMLPLIRQVLDEAGCVATEIDAIAYTAGPGLVGALLVGASCAQALAFAWDIPAIGVHHMEGHLLAPMLEENPPQFPFVALLVSGGHTQLVRVDGIGQYELLGESLDDAAGEAFDKTAKLIGLNYPGGPEIARLAERGVPGRFVFPRPMTDRPGLAFSFSGLKTFALNTWQQCRDAGDDNEQTRCDVSLAFQQAVVETLTIKCKRALKQTGLKRLVIAGGVSANKALRASLEDMLGSIKGNVYYARPQFCTDNGAMIAYAGCQRLLAGQQQDLAISVQARWPMEQLPPL.

His111 and His115 together coordinate Fe cation. Substrate-binding positions include 134–138 (LVSGG), Asp167, Gly180, and Asn276. Asp304 provides a ligand contact to Fe cation.

This sequence belongs to the KAE1 / TsaD family. The cofactor is Fe(2+).

The protein resides in the cytoplasm. It catalyses the reaction L-threonylcarbamoyladenylate + adenosine(37) in tRNA = N(6)-L-threonylcarbamoyladenosine(37) in tRNA + AMP + H(+). In terms of biological role, required for the formation of a threonylcarbamoyl group on adenosine at position 37 (t(6)A37) in tRNAs that read codons beginning with adenine. Is involved in the transfer of the threonylcarbamoyl moiety of threonylcarbamoyl-AMP (TC-AMP) to the N6 group of A37, together with TsaE and TsaB. TsaD likely plays a direct catalytic role in this reaction. This is tRNA N6-adenosine threonylcarbamoyltransferase from Pseudomonas putida (strain W619).